A 57-amino-acid chain; its full sequence is MLFKSLQSITSVNSIQKNQISSISVGSTQSNNNAALLDAAALVVIPGLLTAAAVAHI.

The helical transmembrane segment at 34-54 (AALLDAAALVVIPGLLTAAAV) threads the bilayer.

Its subcellular location is the membrane. This is an uncharacterized protein from Dictyostelium discoideum (Social amoeba).